The primary structure comprises 310 residues: Putative S-adenosyl-L-methionine-dependent methyltransferase Mb0151 (310 aa).

S-adenosyl-L-methionine contacts are provided by residues aspartate 132 and 161-162 (DL).

Belongs to the UPF0677 family.

Functionally, exhibits S-adenosyl-L-methionine-dependent methyltransferase activity. The chain is Putative S-adenosyl-L-methionine-dependent methyltransferase Mb0151 from Mycobacterium bovis (strain ATCC BAA-935 / AF2122/97).